A 525-amino-acid polypeptide reads, in one-letter code: FNIP repeat-containing protein DDB_G0274617 (525 aa).

An FNIP repeat occupies 65–107 (YQHEIKKEMLPSSIISIIFYNIKNILSSDSIPDTVKFLGFNGY).

This Dictyostelium discoideum (Social amoeba) protein is FNIP repeat-containing protein DDB_G0274617.